The sequence spans 207 residues: Large ribosomal subunit protein uL4 (207 aa).

The interval 45–78 is disordered; the sequence is RQGTHAVKNRSARRGGGRKPWRQKGTGRARQGSI. The segment covering 51 to 71 has biased composition (basic residues); sequence VKNRSARRGGGRKPWRQKGTG.

Belongs to the universal ribosomal protein uL4 family. Part of the 50S ribosomal subunit.

Its function is as follows. One of the primary rRNA binding proteins, this protein initially binds near the 5'-end of the 23S rRNA. It is important during the early stages of 50S assembly. It makes multiple contacts with different domains of the 23S rRNA in the assembled 50S subunit and ribosome. Functionally, forms part of the polypeptide exit tunnel. This Lactiplantibacillus plantarum (strain ATCC BAA-793 / NCIMB 8826 / WCFS1) (Lactobacillus plantarum) protein is Large ribosomal subunit protein uL4.